Here is a 54-residue protein sequence, read N- to C-terminus: Large ribosomal subunit protein bL33B (54 aa).

This sequence belongs to the bacterial ribosomal protein bL33 family.

This chain is Large ribosomal subunit protein bL33B, found in Mycolicibacterium smegmatis (strain ATCC 700084 / mc(2)155) (Mycobacterium smegmatis).